Reading from the N-terminus, the 747-residue chain is NAD(P)H-quinone oxidoreductase subunit 5, chloroplastic (747 aa).

Transmembrane regions (helical) follow at residues 8–28 (AWII…ELLL), 39–59 (IWAF…TKLA), 89–109 (IDPL…MVLI), 125–145 (FAYM…PNLI), 147–167 (IHIF…FWFT), 185–205 (GDFG…SFEF), 231–251 (AFLL…HVWL), 259–279 (TPIS…FLVA), 281–301 (LLPL…IGVI), 328–348 (LGYM…FHLI), 355–375 (ALLF…VGYS), 397–417 (TTFF…CFWS), 426–446 (WLYS…TAFY), 550–570 (LFPL…GIHF), 608–628 (FYSV…YGSV), and 726–746 (LFLY…YNFL).

This sequence belongs to the complex I subunit 5 family. NDH is composed of at least 16 different subunits, 5 of which are encoded in the nucleus.

It is found in the plastid. The protein resides in the chloroplast thylakoid membrane. The catalysed reaction is a plastoquinone + NADH + (n+1) H(+)(in) = a plastoquinol + NAD(+) + n H(+)(out). It catalyses the reaction a plastoquinone + NADPH + (n+1) H(+)(in) = a plastoquinol + NADP(+) + n H(+)(out). In terms of biological role, NDH shuttles electrons from NAD(P)H:plastoquinone, via FMN and iron-sulfur (Fe-S) centers, to quinones in the photosynthetic chain and possibly in a chloroplast respiratory chain. The immediate electron acceptor for the enzyme in this species is believed to be plastoquinone. Couples the redox reaction to proton translocation, and thus conserves the redox energy in a proton gradient. In Nymphaea alba (White water-lily), this protein is NAD(P)H-quinone oxidoreductase subunit 5, chloroplastic (ndhF).